The following is a 331-amino-acid chain: Ribose-phosphate pyrophosphokinase (331 aa).

D55 to E57 contacts ATP. H148 and D187 together coordinate Mg(2+). K211 is a catalytic residue. D-ribose 5-phosphate-binding positions include R213, D237, and D241 to T245.

It belongs to the ribose-phosphate pyrophosphokinase family. Class I subfamily. As to quaternary structure, homohexamer. The cofactor is Mg(2+).

Its subcellular location is the cytoplasm. The enzyme catalyses D-ribose 5-phosphate + ATP = 5-phospho-alpha-D-ribose 1-diphosphate + AMP + H(+). The protein operates within metabolic intermediate biosynthesis; 5-phospho-alpha-D-ribose 1-diphosphate biosynthesis; 5-phospho-alpha-D-ribose 1-diphosphate from D-ribose 5-phosphate (route I): step 1/1. Functionally, involved in the biosynthesis of the central metabolite phospho-alpha-D-ribosyl-1-pyrophosphate (PRPP) via the transfer of pyrophosphoryl group from ATP to 1-hydroxyl of ribose-5-phosphate (Rib-5-P). The protein is Ribose-phosphate pyrophosphokinase of Prochlorococcus marinus subsp. pastoris (strain CCMP1986 / NIES-2087 / MED4).